The sequence spans 287 residues: Pantothenate synthetase (287 aa).

An ATP-binding site is contributed by 30–37; sequence MGNLHSGH. Residue H37 is the Proton donor of the active site. Position 61 (Q61) interacts with (R)-pantoate. Residue Q61 participates in beta-alanine binding. 149–152 is an ATP binding site; the sequence is GEKD. Q155 contributes to the (R)-pantoate binding site. Residues V178 and 186–189 contribute to the ATP site; that span reads LSSR.

Belongs to the pantothenate synthetase family. As to quaternary structure, homodimer.

The protein localises to the cytoplasm. The enzyme catalyses (R)-pantoate + beta-alanine + ATP = (R)-pantothenate + AMP + diphosphate + H(+). Its pathway is cofactor biosynthesis; (R)-pantothenate biosynthesis; (R)-pantothenate from (R)-pantoate and beta-alanine: step 1/1. Its function is as follows. Catalyzes the condensation of pantoate with beta-alanine in an ATP-dependent reaction via a pantoyl-adenylate intermediate. This chain is Pantothenate synthetase, found in Pseudomonas putida (strain GB-1).